We begin with the raw amino-acid sequence, 147 residues long: Cytochrome c-type biogenesis protein CcmE (147 aa).

At 1-9 (MKSLKKKRR) the chain is on the cytoplasmic side. Residues 10 to 30 (IQILVAAAVALVLAVGLIGYG) form a helical; Signal-anchor for type II membrane protein membrane-spanning segment. Residues 31-147 (FRDGINLYRS…EQGVYQEPNS (117 aa)) lie on the Periplasmic side of the membrane. Residues histidine 123 and tyrosine 127 each coordinate heme.

It belongs to the CcmE/CycJ family.

It is found in the cell inner membrane. Heme chaperone required for the biogenesis of c-type cytochromes. Transiently binds heme delivered by CcmC and transfers the heme to apo-cytochromes in a process facilitated by CcmF and CcmH. This is Cytochrome c-type biogenesis protein CcmE from Paracoccus denitrificans (strain Pd 1222).